The chain runs to 1213 residues: DNA-directed RNA polymerase subunit beta' (1213 aa).

Residues Cys-60, Cys-62, Cys-75, and Cys-78 each contribute to the Zn(2+) site. Asp-449, Asp-451, and Asp-453 together coordinate Mg(2+). Zn(2+) is bound by residues Cys-818, Cys-892, Cys-899, and Cys-902.

It belongs to the RNA polymerase beta' chain family. The RNAP catalytic core consists of 2 alpha, 1 beta, 1 beta' and 1 omega subunit. When a sigma factor is associated with the core the holoenzyme is formed, which can initiate transcription. Mg(2+) serves as cofactor. Requires Zn(2+) as cofactor.

The catalysed reaction is RNA(n) + a ribonucleoside 5'-triphosphate = RNA(n+1) + diphosphate. DNA-dependent RNA polymerase catalyzes the transcription of DNA into RNA using the four ribonucleoside triphosphates as substrates. This chain is DNA-directed RNA polymerase subunit beta', found in Lactiplantibacillus plantarum (strain ATCC BAA-793 / NCIMB 8826 / WCFS1) (Lactobacillus plantarum).